A 209-amino-acid polypeptide reads, in one-letter code: Uracil phosphoribosyltransferase (209 aa).

Residues Arg79, Arg104, and 131-139 contribute to the 5-phospho-alpha-D-ribose 1-diphosphate site; that span reads DPLLATGNS. Residues Ile194 and 199–201 contribute to the uracil site; that span reads GDA. Asp200 contacts 5-phospho-alpha-D-ribose 1-diphosphate.

Belongs to the UPRTase family. Requires Mg(2+) as cofactor.

It catalyses the reaction UMP + diphosphate = 5-phospho-alpha-D-ribose 1-diphosphate + uracil. Its pathway is pyrimidine metabolism; UMP biosynthesis via salvage pathway; UMP from uracil: step 1/1. Its activity is regulated as follows. Allosterically activated by GTP. Functionally, catalyzes the conversion of uracil and 5-phospho-alpha-D-ribose 1-diphosphate (PRPP) to UMP and diphosphate. The sequence is that of Uracil phosphoribosyltransferase from Rhodococcus opacus (strain B4).